Consider the following 82-residue polypeptide: U-actitoxin-Oulsp2 (82 aa).

The first 21 residues, 1 to 21 (MNTKLVVVFLLSAILFVSVTA), serve as a signal peptide directing secretion. Residues 22–46 (SRPGKDLERDEAYETYDDERPYFKR) constitute a propeptide that is removed on maturation. In terms of domain architecture, ShKT spans 48–82 (CKDNLPAATCSNVKANNNCSSEKYKTNCAKTCGEC). Cystine bridges form between Cys48-Cys82, Cys57-Cys75, and Cys66-Cys79. The theoritically crucial for binding to potassium channels stretch occupies residues 70-71 (KY).

It belongs to the sea anemone type 1 potassium channel toxin family. Type 1b subfamily.

The protein resides in the secreted. The protein localises to the nematocyst. Functionally, probable toxin with unknown function. In contrast to similar toxins, this toxin does not inhibit voltage-gated potassium channels (tested at 100 nM). Does not show antimicrobial activities against bacteria and yeasts. The protein is U-actitoxin-Oulsp2 of Oulactis sp. (Sea anemone).